Reading from the N-terminus, the 152-residue chain is Large ribosomal subunit protein eL32 (152 aa).

It belongs to the eukaryotic ribosomal protein eL32 family.

In Pyrobaculum aerophilum (strain ATCC 51768 / DSM 7523 / JCM 9630 / CIP 104966 / NBRC 100827 / IM2), this protein is Large ribosomal subunit protein eL32 (rpl32e).